Here is a 154-residue protein sequence, read N- to C-terminus: Large ribosomal subunit protein uL22c (154 aa).

The protein belongs to the universal ribosomal protein uL22 family. As to quaternary structure, part of the 50S ribosomal subunit.

Its subcellular location is the plastid. It is found in the chloroplast. Its function is as follows. This protein binds specifically to 23S rRNA. In terms of biological role, the globular domain of the protein is located near the polypeptide exit tunnel on the outside of the subunit, while an extended beta-hairpin is found that lines the wall of the exit tunnel in the center of the 70S ribosome. This Platanus occidentalis (Sycamore) protein is Large ribosomal subunit protein uL22c (rpl22).